The chain runs to 252 residues: Hydroxyacylglutathione hydrolase (252 aa).

7 residues coordinate Zn(2+): His54, His56, Asp58, His59, His111, Asp128, and His166.

It belongs to the metallo-beta-lactamase superfamily. Glyoxalase II family. Monomer. Zn(2+) serves as cofactor.

The enzyme catalyses an S-(2-hydroxyacyl)glutathione + H2O = a 2-hydroxy carboxylate + glutathione + H(+). It functions in the pathway secondary metabolite metabolism; methylglyoxal degradation; (R)-lactate from methylglyoxal: step 2/2. Functionally, thiolesterase that catalyzes the hydrolysis of S-D-lactoyl-glutathione to form glutathione and D-lactic acid. The chain is Hydroxyacylglutathione hydrolase from Aliivibrio salmonicida (strain LFI1238) (Vibrio salmonicida (strain LFI1238)).